The chain runs to 328 residues: Gonadotropin-releasing hormone receptor (328 aa).

The Extracellular portion of the chain corresponds to Met1 to Arg38. Residue Asn18 is glycosylated (N-linked (GlcNAc...) asparagine). Residues Val39–Leu58 form a helical membrane-spanning segment. Over Lys59 to Lys77 the chain is Cytoplasmic. The helical transmembrane segment at Leu78–Leu97 threads the bilayer. The Extracellular segment spans residues Asp98–Lys115. Asn102 carries an N-linked (GlcNAc...) asparagine glycan. A disulfide bond links Cys114 and Cys196. Residues Val116–Leu137 form a helical membrane-spanning segment. The Cytoplasmic portion of the chain corresponds to Asp138–Trp164. Residues Ile165–Ala184 traverse the membrane as a helical segment. At Asp185–Asn212 the chain is on the extracellular side. The helical transmembrane segment at Phe213–Ala232 threads the bilayer. Residues Lys233 to Thr281 lie on the Cytoplasmic side of the membrane. A helical membrane pass occupies residues Pro282–Leu300. At Ser301 to His306 the chain is on the extracellular side. The chain crosses the membrane as a helical span at residues Phe307–Phe326. The Cytoplasmic portion of the chain corresponds to Ser327–Leu328.

Belongs to the G-protein coupled receptor 1 family. Pituitary, ovary, testis, breast and prostate but not in liver and spleen.

The protein localises to the cell membrane. Its function is as follows. Receptor for gonadotropin releasing hormone (GnRH) that mediates the action of GnRH to stimulate the secretion of the gonadotropic hormones luteinizing hormone (LH) and follicle-stimulating hormone (FSH). This receptor mediates its action by association with G-proteins that activate a phosphatidylinositol-calcium second messenger system. Isoform 2 may act as an inhibitor of GnRH-R signaling. This is Gonadotropin-releasing hormone receptor (GNRHR) from Homo sapiens (Human).